The primary structure comprises 419 residues: Voltage-gated potassium channel subunit beta-1 (419 aa).

Residues 1-51 form a disordered region; it reads MLAARTGAAGSQIAEESSKLRKQAAFSGGSKDRSPKKASENVKDSSLSPSG. The segment covering 30 to 43 has biased composition (basic and acidic residues); it reads SKDRSPKKASENVK. Positions 108, 109, 115, and 137 each coordinate NADP(+). Catalysis depends on Y142, which acts as the Proton donor/acceptor. The NADP(+) site is built by N210, S240, R241, Q266, W295, S296, P297, L298, A299, C300, K306, R316, G375, S377, Q381, E384, and N385.

This sequence belongs to the shaker potassium channel beta subunit family. As to quaternary structure, homotetramer. Interaction with tetrameric potassium channel alpha subunits gives rise to a heterooctamer. Identified in potassium channel complexes containing KCNA1, KCNA2, KCNA4, KCNA5, KCNA6, KCNAB1 and KCNAB2. Part of a complex containing KCNA1, KCNA4 and LGI1; interaction with LGI1 inhibits down-regulation of KCNA1 channel activity. Interacts with the dimer formed by GNB1 and GNG2; this enhances KCNA1 binding. Interacts with SQSTM1. Detected in portal vein myocytes (at protein level).

The protein resides in the cytoplasm. It is found in the membrane. The protein localises to the cell membrane. The enzyme catalyses a primary alcohol + NADP(+) = an aldehyde + NADPH + H(+). It carries out the reaction a secondary alcohol + NADP(+) = a ketone + NADPH + H(+). Functionally, regulatory subunit of the voltage-gated potassium (Kv) channels composed of pore-forming and potassium-conducting alpha subunits and of regulatory beta subunits. The beta-1/KCNAB1 cytoplasmic subunit mediates closure of delayed rectifier potassium channels by physically obstructing the pore via its N-terminal domain and increases the speed of channel closure for other family members. Promotes the inactivation of KCNA1, KCNA2, KCNA4, KCNA5 and KCNA6 alpha subunit-containing channels. Displays nicotinamide adenine dinucleotide phosphate (NADPH)-dependent aldoketoreductase activity by catalyzing the NADPH-dependent reduction of a variety of endogenous aldehydes and ketones. The binding of NADPH is required for efficient down-regulation of potassium channel activity. Oxidation of the bound NADPH restrains N-terminal domain from blocking the channel, thereby decreasing N-type inactivation of potassium channel activity. The sequence is that of Voltage-gated potassium channel subunit beta-1 (KCNAB1) from Oryctolagus cuniculus (Rabbit).